Reading from the N-terminus, the 932-residue chain is MTNERKEVSEAPVNFGANLGLMLDLYDDFLQDPSSVPEDLQVLFSTIKNDDSIVPSLKSTSSQNSDGTIKRVMRLIDNIRQYGHLKADIYPVNPPKRKHVPKLEIEDFDLDQQTLEGISAGIVSDHFADIYDNAYEAILRMEKRYKGPIAFEYTHINNNTERGWLKRRIETPYKVTLNNNEKRALFKQLAYVEGFEKYLHKNFVGAKRFSIEGVDALVPMLQRTITIAAKEGIKNIQIGMAHRGRLNVLTHVLEKPYEMMISEFMHTDPMKFLPEDGSLQLTAGWTGDVKYHLGGIKTTDSYGTMQRIALANNPSHLEIVAPVVEGRTRAAQDDTQRAGAPTTDHHKAMPIIIHGDGAYPGQGINFETMNLGNLKGYSTGGSLHIITNNRIGFTTEPIDARSTTYSTDVAKGYDVPIFHVNADDVEATIEAIDIAMEFRKEFHKDVVIDLVGYRRFGHNEMDEPSITNPVPYQNIRKNDSVEYVFGKKLVNEGVISEDEMHSFIEQVQKELRQAHDKINKADKMDNPDMEKPAELALPLQADEQSFTFDHLKEINDALLTYPDGFNILKKLNKVLKKRHEPFNKEDGLVDWAQAEQLAFATILQDGTPIRLTGQDSERGTFSHRHAVLHDEQTGETYTPLHHVPNQKATFDIHNSPLSEAAVVGFEYGYNVENKKSFNIWEAQYGDFANMSQMIFDNFLFSSRSKWGERSGLTLFLPHAYEGQGPEHSSARLERFLQLAAENNCTVVNLSSSSNYFHLLRAQAASLDSEQMRPLVVMSPKSLLRNKTVAKPIDEFTSGGFEPILTESYQADKVTKVILATGKMFIDLKEALAKNPDESVLLVAIERLYPFPEEEIETLLAQLPNLEEVSWVQEEPKNQGAWLYVYPYVKVLVADKYDLSYHGRIQRAAPAEGDGEIHKLVQNKIIENALKNN.

The protein belongs to the alpha-ketoglutarate dehydrogenase family. As to quaternary structure, homodimer. Part of the 2-oxoglutarate dehydrogenase (OGDH) complex composed of E1 (2-oxoglutarate dehydrogenase), E2 (dihydrolipoamide succinyltransferase) and E3 (dihydrolipoamide dehydrogenase); the complex contains multiple copies of the three enzymatic components (E1, E2 and E3). The cofactor is thiamine diphosphate.

It carries out the reaction N(6)-[(R)-lipoyl]-L-lysyl-[protein] + 2-oxoglutarate + H(+) = N(6)-[(R)-S(8)-succinyldihydrolipoyl]-L-lysyl-[protein] + CO2. E1 component of the 2-oxoglutarate dehydrogenase (OGDH) complex which catalyzes the decarboxylation of 2-oxoglutarate, the first step in the conversion of 2-oxoglutarate to succinyl-CoA and CO(2). The chain is 2-oxoglutarate dehydrogenase E1 component from Staphylococcus aureus (strain bovine RF122 / ET3-1).